The following is a 593-amino-acid chain: Regulatory protein NPR1 (593 aa).

Residues serine 11, serine 15, serine 55, and serine 59 each carry the phosphoserine modification. A BTB domain is found at 65–144 (SDAKLVLSDG…VYSSRVRPPP (80 aa)). The segment at 147–161 (VSECADENCCHVACR) adopts a C2HC NPR-type zinc-finger fold. Cysteine 150 and cysteine 155 together coordinate Zn(2+). Cysteine 156 is subject to S-nitrosocysteine. Positions 157 and 160 each coordinate Zn(2+). ANK repeat units lie at residues 229–258 (KSNV…ELGL), 265–295 (KHVS…NLDD), 297–324 (CALH…DVNH), 328–357 (RGYT…SASE), and 361–397 (EGRT…CVEI). Positions 345 to 348 (ILSL) match the SIM3, required fo binding to SUMO3 and subsequent sumoylation motif. The interval 387-525 (HSLKGRLCVE…DQIMNCEDLT (139 aa)) is salicylic acid-binding core (SBC). Position 432 (arginine 432) interacts with salicylate. The Nuclear localization signal motif lies at 537 to 554 (KRLQKKQRYMEIQETLKK). Residues 563 to 593 (LGNSSLTDSTSSTSKSTGGKRSNRKLSHRRR) are disordered. Over residues 566 to 579 (SSLTDSTSSTSKST) the composition is skewed to low complexity. Residues 583–593 (RSNRKLSHRRR) are compositionally biased toward basic residues.

Belongs to the plant 'ANKYRIN-BTB/POZ' family. 'NPR1-like' subfamily. Homodimer. Oligomer of dimers in an uninduced quiescent state; disulfide-linked. Forms activated (i.e. sumoylated) homodimers and monomers upon systemic acquired resistance (SAR) induction. Interacts with TGA1, TGA3, TGA4, TGA5, TGA6, TGA7 and with reduced forms of TGA1 and TGA4. Activated homodimer binds two TGA3 dimers in the presence of DNA via its ANK 2 repeat (265-295), thus forming a TGA3(2)-NPR1(2)-TGA3(2) complex in which NPR1 serves as a transcription cofactor by bridging two transcription factor complexes in an enhanceosome. Interacts with NIMIN-1 and NIMIN-3 via its C-terminal region, and with NIMIN-2 via its N-terminal region. Interacts with SUMO3 but not with SUMO1 and SUMO2; this interaction is required for phosphorylation at Ser-11 and Ser-15, and triggers activation by sumoylation and subsequent degradation. Binds to NPR3 and NPR4; these interactions are promoted by association of salicylic acid (SA) with NPR3, but disrupted by SA association with NPR4, probably due to conformational changes. Binds to CUL3A, a core component of the cullin-RING ubiquitin ligases (CRL); this interaction requires NPR3 and NPR4. Interacts with NPR2 independently of SA. Binds to WRKY70 when unmodified (i.e. not sumoylated). Phosphorylation at Ser-55 and Ser-59 prevents sumoylation to ensure stability and quiescence. In terms of processing, phosphorylated at Ser-11 and Ser-15 in the nucleus; facilitates its recruitment to a cullin3-based ubiquitin ligase leading to polyubiquitination and subsequent CUL3/CSN-mediated degradation. This phosphorylation at Ser-11 and Ser-15 requires interaction with SUMO3, and promotes in turn activation by sumoylation and subsequent degradation. Post-translationally, ubiquitinated. Sumoylated by SUMO3 independently of an E3 ligase to activate defense gene expression by switching from association with WRKY transcriptional repressors (e.g. WRKY70) to TGA transcriptional activators (e.g. TGA3). Sumoylation is inhibited by phosphorylation at Ser-55 and Ser-59, but seems to promote phosphorylation at Ser-11 and Ser-15. Sumoylation also triggers degradation, making immune induction transient. In terms of processing, the Cys-82-SH group reacts with Cys-216-SH of the other subunit to form an intermolecular disulfide. This disulfide might subsequently be reduced upon systemic acquired resistance (SAR) induction. Post-translationally, S-nitrosylation at Cys-156 facilitates its oligomerization.

The protein localises to the cytoplasm. It is found in the nucleus. The protein resides in the nuclear body. The protein operates within protein modification; protein ubiquitination. In terms of biological role, salicylic acid (SA)-binding substrate-specific adapter of an E3 ubiquitin-protein ligase complex (CUL3-RBX1-BTB) which mediates the ubiquitination and subsequent proteasomal degradation of target proteins. Transcription cofactor that represses gene expression in the absence of salicylic acid (SA), when attached to negative cis-elements (W-box) with WRKY transcription factors (e.g. WRKY70), but stimulates gene expression upon activation by SA, when sumoylated and attached to positive cis-elements (as-1) with TGA transcription factors (e.g. TGA3), thus confering immunity through a series of gene regulations ending in a significant increase in antimicrobial and defense genes expression (e.g. PR-1 and PR-2). Binds to SA with low capacity; this leads to conformational changes. Key positive regulator of the SA-dependent signaling pathway that negatively regulates jasmonic acid (JA)-dependent signaling pathway. Controls the onset of systemic acquired resistance (SAR). Upon SAR induction, a biphasic change in cellular reduction potential occurs, resulting in reduction of the cytoplasmic oligomeric form to dimeric and monomeric forms, which accumulate in the nucleus and activate gene expression. Appears to control lesion expansion by acting as an inhibitor of programmed cell death (PCD) during effector-triggered immunity (ETI) that occurs in response to incompatible interaction with avirulent pathogenic bacteria (i.e. Pseudomonas syringae ES4326/avrRpt2) ending in a hypersensitive response (HR). Phosphorylated form is target of proteasome degradation. This is Regulatory protein NPR1 from Arabidopsis thaliana (Mouse-ear cress).